A 422-amino-acid polypeptide reads, in one-letter code: MASLPVSFAKPDKNGVITCKAIMLKEAKLPGMSYADTVQIIDIQVDPPQNVELRVKMLCASVCRTDILTIEGFMAPTQFPKINGHEGVGIIESMGPDTKNFKVGDVIVAPTLGECQVCSSCRSGRTNFCQNYGANESALEPDGTSRFSYIDSDGKKKLLYYKLGCSTWTQYMVVDSNYATKLNEIAPELPPPHGSILSCAFATGYGAVWLDAAVQEGDSVAIFGVGSVGISAVIAAKELKAKQIIVVDRNEYKLKMAMELGATHCINSEKLPEGVTPSQAVRKLTPKEVGVDASIESSGYDVFMNEAMKAAIHGKAKTVITGEGIYENDRIFFDFKDFLFGGNVVGNVTGRVRIHSDFPGLLRKAQEPVIRAGMDKILGYDAATMKCKYEVDIREGTPALLKALEEVENVDCVKLVIKLNDY.

Zn(2+) is bound by residues C63, H85, C115, C118, C121, C129, and C199.

This sequence belongs to the zinc-containing alcohol dehydrogenase family. As to quaternary structure, homodimer. The cofactor is Zn(2+).

It catalyses the reaction (2R)-2-hydroxy-2-methylbutanenitrile = butan-2-one + hydrogen cyanide. Its function is as follows. Involved in the catabolism of cyanogenic glycosides. Naturally occurring substrates are the aliphatic acetone cyanohydrin and butan-2-one cyanohydrin, which are the aglycones of the cyanogenic glycosides linamarin, lotaustralin, linustatin and neolinustatin. Can use various aliphatic ketones and aldehydes as substrates, but not aromatic ketones. In Linum usitatissimum (Flax), this protein is Aliphatic (R)-hydroxynitrile lyase.